The chain runs to 289 residues: Agamous-like MADS-box protein AGL93 (289 aa).

The MADS-box domain occupies 18 to 78 (QTCFKKSSLS…GKLIKTWPDD (61 aa)). The disordered stretch occupies residues 151–197 (EFGQTRAVSSTTNPLSPPPSLIEDHRHQQRTEPLMSGVSNTEQDLST). Polar residues predominate over residues 187–197 (GVSNTEQDLST).

In terms of tissue distribution, expressed in pollen.

It is found in the nucleus. Its function is as follows. Probable transcription factor. The chain is Agamous-like MADS-box protein AGL93 from Arabidopsis thaliana (Mouse-ear cress).